Here is a 41-residue protein sequence, read N- to C-terminus: Alpha-conotoxin CIB (41 aa).

A propeptide spanning residues 1–21 is cleaved from the precursor; that stretch reads SDGRNEAANDEASDVIELALK. Intrachain disulfides connect Cys23-Cys29 and Cys24-Cys37. The tract at residues 25 to 27 is ser-Xaa-Pro motif, crucial for potent interaction with nAChR; the sequence is SNP. Cys37 bears the Cysteine amide mark.

Belongs to the conotoxin A superfamily. Expressed by the venom duct.

Its subcellular location is the secreted. In terms of biological role, alpha-conotoxins act on postsynaptic membranes, they bind to the nicotinic acetylcholine receptors (nAChR) and thus inhibit them. This toxin blocks rat neuronal nAChR alpha-3-beta-2/CHRNA3-CHRNB2 (IC(50)=128.9 nM) and alpha-7/CHRNA7 (IC(50)=1511 nM). In vivo, intramuscular injection into zebrafish does not produce any effect on the locomotion of zebrafish. The polypeptide is Alpha-conotoxin CIB (Conus catus (Cat cone)).